Consider the following 624-residue polypeptide: DNA mismatch repair protein MutL (624 aa).

A disordered region spans residues 355-377; sequence EESAPERKLPEKTPEPSYSPMKL. Residues 358-368 show a composition bias toward basic and acidic residues; that stretch reads APERKLPEKTP.

The protein belongs to the DNA mismatch repair MutL/HexB family.

In terms of biological role, this protein is involved in the repair of mismatches in DNA. It is required for dam-dependent methyl-directed DNA mismatch repair. May act as a 'molecular matchmaker', a protein that promotes the formation of a stable complex between two or more DNA-binding proteins in an ATP-dependent manner without itself being part of a final effector complex. The chain is DNA mismatch repair protein MutL from Bacillus velezensis (strain DSM 23117 / BGSC 10A6 / LMG 26770 / FZB42) (Bacillus amyloliquefaciens subsp. plantarum).